The chain runs to 401 residues: MNYDHILIRFGEISTKGKNRRSFIERLKQNIRLVLKDYKKVKYFSNRDRMSITLNGENPEEICSLLKNIFGIQSFSLAIKCESKLEDIKKTALAAIEGEYKPGNTFKVETKRAYKQFELDTNAMNAEIGGHILKNTDGLTVDVKHPDIPLRIEIREEATFLTIRNEKGAGGLPVGSAGKAMLMLSGGFDSPVAGFYAMKRGLSVEAVHFFSPPYTSERAKQKVMDLAGCLAKFGGSMTLHIVPFTKTQELIQKQIPENYTMTATRRLMLQIADRIREERKALAIITGESLGQVASQTLESMYAINAVTATPILRPLIGMDKTEIIEKSKEIGTYETSIQPFEDCCTIFTPPSPKTRPKKEKIEHFESFVDFEPLIAEAAAGIETITVYSEQEAHDKFAGLF.

The THUMP domain maps to 60-165; the sequence is EEICSLLKNI…EEATFLTIRN (106 aa). Residues 183-184, 208-209, Arg-265, Gly-287, and Gln-296 each bind ATP; these read ML and HF.

It belongs to the ThiI family.

It localises to the cytoplasm. The enzyme catalyses [ThiI sulfur-carrier protein]-S-sulfanyl-L-cysteine + a uridine in tRNA + 2 reduced [2Fe-2S]-[ferredoxin] + ATP + H(+) = [ThiI sulfur-carrier protein]-L-cysteine + a 4-thiouridine in tRNA + 2 oxidized [2Fe-2S]-[ferredoxin] + AMP + diphosphate. The catalysed reaction is [ThiS sulfur-carrier protein]-C-terminal Gly-Gly-AMP + S-sulfanyl-L-cysteinyl-[cysteine desulfurase] + AH2 = [ThiS sulfur-carrier protein]-C-terminal-Gly-aminoethanethioate + L-cysteinyl-[cysteine desulfurase] + A + AMP + 2 H(+). The protein operates within cofactor biosynthesis; thiamine diphosphate biosynthesis. Catalyzes the ATP-dependent transfer of a sulfur to tRNA to produce 4-thiouridine in position 8 of tRNAs, which functions as a near-UV photosensor. Also catalyzes the transfer of sulfur to the sulfur carrier protein ThiS, forming ThiS-thiocarboxylate. This is a step in the synthesis of thiazole, in the thiamine biosynthesis pathway. The sulfur is donated as persulfide by IscS. The sequence is that of Probable tRNA sulfurtransferase from Bacillus velezensis (strain DSM 23117 / BGSC 10A6 / LMG 26770 / FZB42) (Bacillus amyloliquefaciens subsp. plantarum).